We begin with the raw amino-acid sequence, 146 residues long: 3-dehydroquinate dehydratase (146 aa).

Tyr22 serves as the catalytic Proton acceptor. Asn74, His80, and Asp87 together coordinate substrate. His100 acts as the Proton donor in catalysis. Substrate contacts are provided by residues 101–102 (LS) and Arg111.

It belongs to the type-II 3-dehydroquinase family. As to quaternary structure, homododecamer.

It carries out the reaction 3-dehydroquinate = 3-dehydroshikimate + H2O. It functions in the pathway metabolic intermediate biosynthesis; chorismate biosynthesis; chorismate from D-erythrose 4-phosphate and phosphoenolpyruvate: step 3/7. Its function is as follows. Catalyzes a trans-dehydration via an enolate intermediate. The polypeptide is 3-dehydroquinate dehydratase (Clostridium beijerinckii (strain ATCC 51743 / NCIMB 8052) (Clostridium acetobutylicum)).